Here is an 898-residue protein sequence, read N- to C-terminus: Chloride channel protein 2 (898 aa).

Residues 1–90 (MAAPAAAAVE…RCHKFLVSRV (90 aa)) lie on the Cytoplasmic side of the membrane. Residues 19–37 (QYEQTLMYGRYTQDLGAFA) form an essential for channel gating by both voltage and cell volume region. Residue threonine 23 is modified to Phosphothreonine. Residues 39 to 52 (EEAARIRLGGPEPW) form a modulates channel gating by both voltage and cell volume region. The next 2 helical transmembrane spans lie at 91 to 124 (GEDW…AQQW) and 133 to 158 (LLLQ…TQIL). The Selectivity filter part_1 signature appears at 164 to 168 (GSGIP). The segment at residues 167–174 (IPEMKTIL) is an intramembrane region (helical). A run of 2 helical transmembrane segments spans residues 183–201 (LTLK…ALGS) and 208–226 (EGPF…SKFL). Positions 206–210 (GKEGP) match the Selectivity filter part_2 motif. Intramembrane regions (helical) lie at residues 242-254 (MLAA…VGCC) and 258-266 (PIGGVLFSI). Transmembrane regions (helical) follow at residues 278–298 (YWRG…LAVW), 324–352 (LPAF…VQVM), 361–380 (FLMR…ISTL), 432–452 (ANVF…SALA), and 460–483 (GAFM…MAAW). Residues 460–464 (GAFMP) carry the Selectivity filter part_3 motif. Positions 500–514 (GGYAVVGAAALAGAV) form an intramembrane region, helical. An intramembrane region (note=Loop between two helices) is located at residues 515–516 (TH). An intramembrane region (helical) is located at residues 517–528 (TVSTAVIVFELT). Residues 529–533 (GQIAH) constitute an intramembrane region (note=Loop between two helices). Residues 534 to 551 (ILPVMIAVILANAVAQSL) form a helical membrane-spanning segment. Over 552 to 898 (QPSLYDSIIR…SPSDSDDKCQ (347 aa)) the chain is Cytoplasmic. A CBS 1 domain is found at 587–645 (MVRDVPHVALSCTFRDLRLALHRTKGRTLALVESPESMILLGSIERTQVVALLAAQLSP). Positions 647–658 (RRRQSKQKRRVA) are enriched in basic residues. The tract at residues 647 to 675 (RRRQSKQKRRVAHTSPPSCQESPPSPETS) is disordered. The residue at position 710 (serine 710) is a Phosphoserine. The tract at residues 726-766 (FCGSPPPEAASESEKSESSEKRKSKRVRISLASDSDLEGEM) is disordered. Residues 737–746 (ESEKSESSEK) are compositionally biased toward basic and acidic residues. Serine 758 bears the Phosphoserine mark. In terms of domain architecture, CBS 2 spans 790 to 850 (IDPAPFQLVE…GSVTAQGVKV (61 aa)). A Basolateral membrane sorting motif is present at residues 812 to 813 (LL). The disordered stretch occupies residues 856-898 (SFRDSATSSSDTETTEVHALWGPRSRHGLPREGSPSDSDDKCQ).

The protein belongs to the chloride channel (TC 2.A.49) family. ClC-2/CLCN2 subfamily. As to quaternary structure, homodimer. Interacts with auxiliary subunit HEPACAM. Post-translationally, phosphorylated. Activated by dephosphorylation. Ubiquitously expressed.

The protein resides in the cell membrane. It is found in the basolateral cell membrane. It localises to the cell projection. The protein localises to the dendritic spine membrane. Its subcellular location is the axon. The catalysed reaction is chloride(in) = chloride(out). It catalyses the reaction thiocyanate(in) = thiocyanate(out). The enzyme catalyses bromide(in) = bromide(out). It carries out the reaction nitrate(in) = nitrate(out). The catalysed reaction is iodide(out) = iodide(in). With respect to regulation, common gate kinetics are down-regulated by intracellular ATP. Inhibited by AK-42, a derivative of meclofenamate. Inhibited by Cd(2+). Inhibited by Zn(2+) and PKC activation. Inhibited at acidic pH. CCLN2:HEPACAM channel conductance is up-regulated upon hypo-osmolarity. Functionally, voltage-gated and osmosensitive chloride channel. Forms a homodimeric channel where each subunit has its own ion conduction pathway. Conducts double-barreled currents controlled by two types of gates, two fast glutamate gates that control each subunit independently and a slow common gate that opens and shuts off both subunits simultaneously. Displays inward rectification currents activated upon membrane hyperpolarization and extracellular hypotonicity. Contributes to chloride conductance involved in neuron excitability. In hippocampal neurons, generates a significant part of resting membrane conductance and provides an additional chloride efflux pathway to prevent chloride accumulation in dendrites upon GABA receptor activation. In glia, associates with the auxiliary subunit HEPACAM/GlialCAM at astrocytic processes and myelinated fiber tracts where it may regulate transcellular chloride flux buffering extracellular chloride and potassium concentrations. Regulates aldosterone production in adrenal glands. The opening of CLCN2 channels at hyperpolarized membrane potentials in the glomerulosa causes cell membrane depolarization, activation of voltage-gated calcium channels and increased expression of aldosterone synthase, the rate-limiting enzyme for aldosterone biosynthesis. Contributes to chloride conductance in retinal pigment epithelium involved in phagocytosis of shed photoreceptor outer segments and photoreceptor renewal. Conducts chloride currents at the basolateral membrane of epithelial cells with a role in chloride reabsorption rather than secretion. Permeable to small monovalent anions with chloride &gt; thiocyanate &gt; bromide &gt; nitrate &gt; iodide ion selectivity. The protein is Chloride channel protein 2 (CLCN2) of Oryctolagus cuniculus (Rabbit).